The chain runs to 201 residues: 3-isopropylmalate dehydratase small subunit (201 aa).

It belongs to the LeuD family. LeuD type 1 subfamily. In terms of assembly, heterodimer of LeuC and LeuD.

It catalyses the reaction (2R,3S)-3-isopropylmalate = (2S)-2-isopropylmalate. It participates in amino-acid biosynthesis; L-leucine biosynthesis; L-leucine from 3-methyl-2-oxobutanoate: step 2/4. Its function is as follows. Catalyzes the isomerization between 2-isopropylmalate and 3-isopropylmalate, via the formation of 2-isopropylmaleate. This chain is 3-isopropylmalate dehydratase small subunit, found in Cereibacter sphaeroides (strain ATCC 17029 / ATH 2.4.9) (Rhodobacter sphaeroides).